The primary structure comprises 623 residues: DNA-directed RNA polymerase subunit gamma (623 aa).

Residues cysteine 70, cysteine 72, cysteine 85, and cysteine 88 each coordinate Zn(2+). Positions 466, 468, and 470 each coordinate Mg(2+).

The protein belongs to the RNA polymerase beta' chain family. RpoC1 subfamily. In cyanobacteria the RNAP catalytic core is composed of 2 alpha, 1 beta, 1 beta', 1 gamma and 1 omega subunit. When a sigma factor is associated with the core the holoenzyme is formed, which can initiate transcription. The cofactor is Mg(2+). Zn(2+) is required as a cofactor.

The enzyme catalyses RNA(n) + a ribonucleoside 5'-triphosphate = RNA(n+1) + diphosphate. Its function is as follows. DNA-dependent RNA polymerase catalyzes the transcription of DNA into RNA using the four ribonucleoside triphosphates as substrates. The protein is DNA-directed RNA polymerase subunit gamma of Acaryochloris marina (strain MBIC 11017).